A 1816-amino-acid polypeptide reads, in one-letter code: Nuclear pore complex protein Nup98-Nup96 (1816 aa).

The tract at residues 1–156 (MFNKSFGTPF…LFGPSSFTAA (156 aa)) is FG repeats 1. The GLEBS; interaction with RAE1 stretch occupies residues 157 to 213 (PTGTTIKFNPPTGTDTMVKAGVSTNISTKHQCITAMKEYESKSLEELRLEDYQANRK). An FG repeats 2 region spans residues 214-480 (GPQNQVGGGT…NTSTAILGFG (267 aa)). Residues 512 to 535 (PFGDSPLFRNPMSDPKKKEERLKP) are disordered. S524 carries the phosphoserine modification. Positions 525–534 (DPKKKEERLK) are enriched in basic and acidic residues. K563 participates in a covalent cross-link: Glycyl lysine isopeptide (Lys-Gly) (interchain with G-Cter in SUMO2). K603 carries the post-translational modification N6-acetyllysine; alternate. K603 is covalently cross-linked (Glycyl lysine isopeptide (Lys-Gly) (interchain with G-Cter in SUMO2); alternate). Residues S608, S612, S618, S623, S625, and S653 each carry the phosphoserine modification. A disordered region spans residues 663–682 (IAKPIPQTPESVGNKNNSSS). Residue K665 forms a Glycyl lysine isopeptide (Lys-Gly) (interchain with G-Cter in SUMO2) linkage. The residue at position 670 (T670) is a Phosphothreonine. A phosphoserine mark is found at S673, S680, S681, and S839. Low complexity predominate over residues 673–682 (SVGNKNNSSS). Residues 738–880 (KVGYYTIPSM…GSWVFKVSHF (143 aa)) enclose the Peptidase S59 domain. The active-site Nucleophile is the S881. Residues 886–937 (QDSDEEEEEHPPKTTSKKLKTAPLPPAGQATTFQMTLNGKPAPPPQSQSPEV) form a disordered region. Residues S888, S934, S1027, S1042, S1059, and S1063 each carry the phosphoserine modification. A Phosphothreonine modification is found at T1069. S1328 carries the phosphoserine modification. T1771 carries the phosphothreonine modification.

This sequence belongs to the nucleoporin GLFG family. In terms of assembly, part of the nuclear pore complex (NPC). Interacts directly with NUP96. Part of the Nup160 subcomplex in the nuclear pore which is composed of NUP160, NUP133, NUP107 and NUP96; this complex plays a role in RNA export and in tethering NUP98 and NUP153 to the nucleus. Interacts with RAE1. Does not interact with TPR. Interacts directly with NUP88 and NUP214, subunits of the cytoplasmic filaments of the NPC. Interacts (via N-terminus) with DHX9 (via DRBM, OB-fold and RGG domains); this interaction occurs in a RNA-dependent manner and stimulates DHX9-mediated ATPase activity. Autoproteolytically cleaved to yield Nup98 and Nup96 or Nup98 only, respectively. Cleaved Nup98 is necessary for the targeting of Nup98 to the nuclear pore and the interaction with Nup96.

Its subcellular location is the nucleus membrane. It localises to the nucleus. It is found in the nuclear pore complex. The protein resides in the nucleoplasm. Functionally, plays a role in the nuclear pore complex (NPC) assembly and/or maintenance. NUP98 and NUP96 are involved in the bidirectional transport across the NPC. May anchor NUP153 and TPR to the NPC. In cooperation with DHX9, plays a role in transcription and alternative splicing activation of a subset of genes. Involved in the localization of DHX9 in discrete intranuclear foci (GLFG-body). The chain is Nuclear pore complex protein Nup98-Nup96 (Nup98) from Mus musculus (Mouse).